A 276-amino-acid chain; its full sequence is NH(3)-dependent NAD(+) synthetase (276 aa).

ATP is bound at residue 43 to 50; sequence GISGGVDS. Asp49 contacts Mg(2+). Arg146 contacts deamido-NAD(+). An ATP-binding site is contributed by Thr166. Residue Glu171 participates in Mg(2+) binding. Residues Lys179 and Asp186 each contribute to the deamido-NAD(+) site. Residues Lys195 and Thr217 each coordinate ATP. 266 to 267 is a deamido-NAD(+) binding site; it reads HK.

Belongs to the NAD synthetase family. In terms of assembly, homodimer.

The enzyme catalyses deamido-NAD(+) + NH4(+) + ATP = AMP + diphosphate + NAD(+) + H(+). Its pathway is cofactor biosynthesis; NAD(+) biosynthesis; NAD(+) from deamido-NAD(+) (ammonia route): step 1/1. In terms of biological role, catalyzes the ATP-dependent amidation of deamido-NAD to form NAD. Uses ammonia as a nitrogen source. The polypeptide is NH(3)-dependent NAD(+) synthetase (Shewanella sediminis (strain HAW-EB3)).